The primary structure comprises 410 residues: Translation initiation factor 2 subunit gamma (410 aa).

The tr-type G domain occupies 9-202; it reads QAEVNIGMVG…AIEEFIPTPK (194 aa). Positions 18–25 are G1; it reads GHVDHGKT. Mg(2+) is bound by residues D21, T25, G46, and T48. 21 to 26 is a binding site for GTP; sequence DHGKTT. Positions 46–50 are G2; it reads GITIK. Positions 61, 64, 73, and 76 each coordinate Zn(2+). Residues 90–93 form a G3 region; sequence DAPG. Residues 145–148 and 180–182 each bind GTP; these read NKIE and SAL. The G4 stretch occupies residues 145–148; sequence NKIE. The tract at residues 180 to 182 is G5; that stretch reads SAL.

This sequence belongs to the TRAFAC class translation factor GTPase superfamily. Classic translation factor GTPase family. EIF2G subfamily. Heterotrimer composed of an alpha, a beta and a gamma chain. Requires Mg(2+) as cofactor.

The enzyme catalyses GTP + H2O = GDP + phosphate + H(+). Its function is as follows. eIF-2 functions in the early steps of protein synthesis by forming a ternary complex with GTP and initiator tRNA. In Thermococcus kodakarensis (strain ATCC BAA-918 / JCM 12380 / KOD1) (Pyrococcus kodakaraensis (strain KOD1)), this protein is Translation initiation factor 2 subunit gamma.